Reading from the N-terminus, the 394-residue chain is MNKKSIRDVDLKGKRVFCRVDFNVPMKEGKITDETRIRAALPTIQYLVEQGAKVILASHLGRPKGQAVEELRLTPVAARLGELLGKDVKKADEAFGPVAQEMVAAMNEGDVLVLENVRFYAGEEKNDAELAKEFAALADIFVNDAFGAAHRAHASTAGIADYLPAVSGLLMEKELEVLGKALSNPERPFTAIIGGAKVKDKIGVIRHLLDKVDNLIIGGGLAYTFVKALGHEIGLSLCEDDKIELAKEFMQLAKEKGVNFYMPVDVVITEEFSETATTKIVGIDSIPSNWEGVDIGPKTREIYADVIKNSKLVVWNGPMGVFEMTPFAEGTKAVGQALADAEGTYSVIGGGDSAAAVEKFGMADKMSHISTGGGASLEFMEGKELPGVVCLNDK.

Residues 21–23 (DFN), arginine 36, 59–62 (HLGR), arginine 118, and arginine 151 contribute to the substrate site. Serine 183 carries the post-translational modification Phosphoserine. 2 residues coordinate ATP: lysine 201 and glycine 292. A Phosphothreonine modification is found at threonine 299. Residues glutamate 323 and 350–353 (GGDS) contribute to the ATP site.

The protein belongs to the phosphoglycerate kinase family. In terms of assembly, monomer.

The protein localises to the cytoplasm. It carries out the reaction (2R)-3-phosphoglycerate + ATP = (2R)-3-phospho-glyceroyl phosphate + ADP. It functions in the pathway carbohydrate degradation; glycolysis; pyruvate from D-glyceraldehyde 3-phosphate: step 2/5. The chain is Phosphoglycerate kinase from Bacillus thuringiensis (strain Al Hakam).